The primary structure comprises 276 residues: Ribosomal RNA small subunit methyltransferase I (276 aa).

This sequence belongs to the methyltransferase superfamily. RsmI family.

Its subcellular location is the cytoplasm. The enzyme catalyses cytidine(1402) in 16S rRNA + S-adenosyl-L-methionine = 2'-O-methylcytidine(1402) in 16S rRNA + S-adenosyl-L-homocysteine + H(+). In terms of biological role, catalyzes the 2'-O-methylation of the ribose of cytidine 1402 (C1402) in 16S rRNA. The sequence is that of Ribosomal RNA small subunit methyltransferase I from Mycoplasma pneumoniae (strain ATCC 29342 / M129 / Subtype 1) (Mycoplasmoides pneumoniae).